The primary structure comprises 189 residues: Acireductone dioxygenase 1 (189 aa).

Fe(2+)-binding residues include His102, His104, Glu108, and His146. Ni(2+) is bound by residues His102, His104, Glu108, and His146.

Belongs to the acireductone dioxygenase (ARD) family. Monomer. The cofactor is Fe(2+). Ni(2+) is required as a cofactor.

It catalyses the reaction 1,2-dihydroxy-5-(methylsulfanyl)pent-1-en-3-one + O2 = 3-(methylsulfanyl)propanoate + CO + formate + 2 H(+). It carries out the reaction 1,2-dihydroxy-5-(methylsulfanyl)pent-1-en-3-one + O2 = 4-methylsulfanyl-2-oxobutanoate + formate + 2 H(+). It participates in amino-acid biosynthesis; L-methionine biosynthesis via salvage pathway; L-methionine from S-methyl-5-thio-alpha-D-ribose 1-phosphate: step 5/6. Catalyzes 2 different reactions between oxygen and the acireductone 1,2-dihydroxy-3-keto-5-methylthiopentene (DHK-MTPene) depending upon the metal bound in the active site. Fe-containing acireductone dioxygenase (Fe-ARD) produces formate and 2-keto-4-methylthiobutyrate (KMTB), the alpha-ketoacid precursor of methionine in the methionine recycle pathway. Ni-containing acireductone dioxygenase (Ni-ARD) produces methylthiopropionate, carbon monoxide and formate, and does not lie on the methionine recycle pathway. The polypeptide is Acireductone dioxygenase 1 (Nocardia farcinica (strain IFM 10152)).